Here is a 319-residue protein sequence, read N- to C-terminus: Acetyl-coenzyme A carboxylase carboxyl transferase subunit alpha (319 aa).

Residues 35–296 enclose the CoA carboxyltransferase C-terminal domain; it reads NLDEEVQRLR…KAQLLADLLD (262 aa).

The protein belongs to the AccA family. As to quaternary structure, acetyl-CoA carboxylase is a heterohexamer composed of biotin carboxyl carrier protein (AccB), biotin carboxylase (AccC) and two subunits each of ACCase subunit alpha (AccA) and ACCase subunit beta (AccD).

Its subcellular location is the cytoplasm. The catalysed reaction is N(6)-carboxybiotinyl-L-lysyl-[protein] + acetyl-CoA = N(6)-biotinyl-L-lysyl-[protein] + malonyl-CoA. Its pathway is lipid metabolism; malonyl-CoA biosynthesis; malonyl-CoA from acetyl-CoA: step 1/1. Its function is as follows. Component of the acetyl coenzyme A carboxylase (ACC) complex. First, biotin carboxylase catalyzes the carboxylation of biotin on its carrier protein (BCCP) and then the CO(2) group is transferred by the carboxyltransferase to acetyl-CoA to form malonyl-CoA. The chain is Acetyl-coenzyme A carboxylase carboxyl transferase subunit alpha from Pectobacterium atrosepticum (strain SCRI 1043 / ATCC BAA-672) (Erwinia carotovora subsp. atroseptica).